Here is a 183-residue protein sequence, read N- to C-terminus: MNISPSPLTDTGKALLRLNLIAIALLWLYPLLTYSQLPETVPTHFGAGGEPDRFGSREELLILPAVFSIAPAIILIITKLRFTLINRYPQFINLPAFYMNIGKIREERRSYWVNRYFEPVLLLSLILSAGFLGMEYAIFHATLSGELPLLFYIILIFVIAAPLFIFFLYLSMISAQMSREIGE.

Transmembrane regions (helical) follow at residues 13 to 35, 60 to 82, 117 to 139, and 149 to 171; these read KALLRLNLIAIALLWLYPLLTYS, LLILPAVFSIAPAIILIITKLRF, FEPVLLLSLILSAGFLGMEYAIF, and LLFYIILIFVIAAPLFIFFLYLS.

It localises to the cell membrane. This is an uncharacterized protein from Archaeoglobus fulgidus (strain ATCC 49558 / DSM 4304 / JCM 9628 / NBRC 100126 / VC-16).